Here is a 479-residue protein sequence, read N- to C-terminus: MKKLSSISTALGSFLLSVSFSLPTFANINVSDLTQKLPEGSNVGFIAKNINQNQIIADYNGSTFMLSASTQKVFTAVAAKLALDDQFQFETALLSNGKIQNGNLDGNLIVRFTGDPDLTRGQLYSLLAELKKQGIKKINGDLVLDTSVFSSHDRGLGWIWNDLTMCFNSPPAAANIDNNCFYAELDANKNPGEIVKINVPAQFPIQVFGQVYVADSNEAPYCQLDVVVHDNNRYQVKGCLARQYKPFGLSFAVQNTDAYAAEIIQRQLRQLGIEFNGKVLLPQKPQQGQLLAKHLSKPLPDLLKKMMKKSDNQIADSLFRAVAFNYYKRPASFQLGTLAVKSILQKQGIRFGNSILADGSGLSRHNLVAPKTMLSVLEYIAKNEDKLHLMETFPIAGVDGTISGRGGLISPPLVKNVIAKTGSLKGVYNLAGFMTNARGEKVAFVQFINGYSTGDLESKTKRAPLVQFERNLYNELYKY.

The first 26 residues, 1–26 (MKKLSSISTALGSFLLSVSFSLPTFA), serve as a signal peptide directing secretion. Serine 69 (acyl-ester intermediate) is an active-site residue. Lysine 72 serves as the catalytic Proton acceptor. Residue serine 310 is part of the active site. Lysine 420 contacts substrate.

It belongs to the peptidase S13 family.

The protein localises to the periplasm. The enzyme catalyses Preferential cleavage: (Ac)2-L-Lys-D-Ala-|-D-Ala. Also transpeptidation of peptidyl-alanyl moieties that are N-acyl substituents of D-alanine.. Its pathway is cell wall biogenesis; peptidoglycan biosynthesis. Not involved in transpeptidation but exclusively catalyzes a DD-carboxypeptidase and DD-endopeptidase reaction. This is D-alanyl-D-alanine carboxypeptidase DacB (dacB) from Haemophilus influenzae (strain ATCC 51907 / DSM 11121 / KW20 / Rd).